We begin with the raw amino-acid sequence, 277 residues long: Myelin proteolipid protein (277 aa).

At 2–10 (GLLECCARC) the chain is on the cytoplasmic side. 3 S-palmitoyl cysteine lipidation sites follow: Cys-6, Cys-7, and Cys-10. The chain crosses the membrane as a helical span at residues 11–36 (LIGAPFASLVATGLCFFGVALFCGCG). Topologically, residues 37-59 (HEALTGTEQLIETYFSKNYQDYE) are extracellular. The helical transmembrane segment at 60–88 (YLIDVIHAFQYVIYGTASFFFLYGALLLA) threads the bilayer. Over 89–151 (EGFYTTGAVR…LGKWLGHPDK (63 aa)) the chain is Cytoplasmic. 3 S-palmitoyl cysteine lipidation sites follow: Cys-109, Cys-139, and Cys-141. A helical transmembrane segment spans residues 152–178 (FVGITYVLTIVWLLAFACSAVPVYIYF). Over 179–238 (NTWTTCQSIAFPTKTTASIGTLCADARMYGVLPWNAFPGKVCGSNLLSICKTSEFQMTFH) the chain is Extracellular. Disulfide bonds link Cys-184–Cys-228 and Cys-201–Cys-220. Thr-199 carries the O-palmitoyl threonine lipid modification. Residues 239–268 (LFIAAFVGAAATLVSLLTFMIAATYNFAVL) traverse the membrane as a helical segment. At 269-277 (KLMGRGTKF) the chain is on the cytoplasmic side.

The protein belongs to the myelin proteolipid protein family.

It is found in the cell membrane. In terms of biological role, this is the major myelin protein from the central nervous system. It plays an important role in the formation or maintenance of the multilamellar structure of myelin. In Gallus gallus (Chicken), this protein is Myelin proteolipid protein (PLP1).